Here is a 471-residue protein sequence, read N- to C-terminus: Light-independent protochlorophyllide reductase subunit N (471 aa).

[4Fe-4S] cluster is bound by residues Cys-22, Cys-47, and Cys-107.

The protein belongs to the BchN/ChlN family. In terms of assembly, protochlorophyllide reductase is composed of three subunits; ChlL, ChlN and ChlB. Forms a heterotetramer of two ChlB and two ChlN subunits. [4Fe-4S] cluster serves as cofactor.

The protein resides in the plastid. The protein localises to the chloroplast. It carries out the reaction chlorophyllide a + oxidized 2[4Fe-4S]-[ferredoxin] + 2 ADP + 2 phosphate = protochlorophyllide a + reduced 2[4Fe-4S]-[ferredoxin] + 2 ATP + 2 H2O. It functions in the pathway porphyrin-containing compound metabolism; chlorophyll biosynthesis (light-independent). Its function is as follows. Component of the dark-operative protochlorophyllide reductase (DPOR) that uses Mg-ATP and reduced ferredoxin to reduce ring D of protochlorophyllide (Pchlide) to form chlorophyllide a (Chlide). This reaction is light-independent. The NB-protein (ChlN-ChlB) is the catalytic component of the complex. This chain is Light-independent protochlorophyllide reductase subunit N, found in Anthoceros angustus (Hornwort).